A 586-amino-acid polypeptide reads, in one-letter code: MLMRMSTLFLRTLREDPVEAEVASHKLLVRAGYVRRAAPGIYTWLPLGLKVLRKVEQVVREEMDAAGAQEVHFPALLPREPYEATNRWSDYGDGIFKLKDRKGADYLLAPTHEEMFTLLVKDLYSSYKDLPLSIYQIQTKYRDEARPRAGIIRGREFTMKDSYSFDVDDAGLERSYELHRQAYVRIFERLGLDFVIVSAVSGAMGGSRSEEFLHPTAIGEDTFVRSPGGYAANAEAVTTLAPPAVPFDGLPAAHVEDTPDTPTIETLVAVSNEKHPRADRPWTAADTLKNVFVVLRHPDGTREPLAVGVPGDREVDPKRLEAAVSPAEVEAFEAADFAKHPALVKGYIGPGVLGTEGASGIRYLVDPRVVDGTAWITGADAEGRHVFDLVAGRDFTPDGFVEAAEVKAGDPAPDGSGPLELARGIEIAHIFALGRRFAQALDLKVLDENGKQVVVTMGSYGVGVTRALACVAEGNHDEKGLVWPRALAPADVHVVATGKDPEIFATAERLAGELVAQGLEVLYDDRPKVSPGVKFKDAELIGVPTILVVGKGLAEGLVELKDRRSGDSEQVALDDAVSRVATAVRG.

The protein belongs to the class-II aminoacyl-tRNA synthetase family. ProS type 1 subfamily. In terms of assembly, homodimer.

It localises to the cytoplasm. The catalysed reaction is tRNA(Pro) + L-proline + ATP = L-prolyl-tRNA(Pro) + AMP + diphosphate. Catalyzes the attachment of proline to tRNA(Pro) in a two-step reaction: proline is first activated by ATP to form Pro-AMP and then transferred to the acceptor end of tRNA(Pro). As ProRS can inadvertently accommodate and process non-cognate amino acids such as alanine and cysteine, to avoid such errors it has two additional distinct editing activities against alanine. One activity is designated as 'pretransfer' editing and involves the tRNA(Pro)-independent hydrolysis of activated Ala-AMP. The other activity is designated 'posttransfer' editing and involves deacylation of mischarged Ala-tRNA(Pro). The misacylated Cys-tRNA(Pro) is not edited by ProRS. This is Proline--tRNA ligase from Kineococcus radiotolerans (strain ATCC BAA-149 / DSM 14245 / SRS30216).